The following is a 93-amino-acid chain: Alpha-elapitoxin-Oh2a (93 aa).

The N-terminal stretch at 1–21 (MKTLLLTLVVVTIVCLDLGYT) is a signal peptide. 5 disulfide bridges follow: C24–C43, C36–C64, C49–C53, C68–C79, and C80–C85.

Belongs to the three-finger toxin family. Long-chain subfamily. Type II alpha-neurotoxin sub-subfamily. As to expression, expressed by the venom gland.

It localises to the secreted. Functionally, binds with high affinity to muscular (alpha-1/CHRNA1) and neuronal (alpha-7/CHRNA7) nicotinic acetylcholine receptor (nAChR) and inhibits acetylcholine from binding to the receptor, thereby impairing neuromuscular and neuronal transmission. This is Alpha-elapitoxin-Oh2a from Ophiophagus hannah (King cobra).